The sequence spans 214 residues: Histidine biosynthesis bifunctional protein HisIE (214 aa).

The phosphoribosyl-AMP cyclohydrolase stretch occupies residues 1 to 114 (MDLSAVRFDE…LEGEKDLGFV (114 aa)). Positions 115–214 (VGQVYATIKE…RSPYDGSHGN (100 aa)) are phosphoribosyl-ATP pyrophosphohydrolase.

This sequence in the N-terminal section; belongs to the PRA-CH family. In the C-terminal section; belongs to the PRA-PH family.

It localises to the cytoplasm. The catalysed reaction is 1-(5-phospho-beta-D-ribosyl)-ATP + H2O = 1-(5-phospho-beta-D-ribosyl)-5'-AMP + diphosphate + H(+). It carries out the reaction 1-(5-phospho-beta-D-ribosyl)-5'-AMP + H2O = 1-(5-phospho-beta-D-ribosyl)-5-[(5-phospho-beta-D-ribosylamino)methylideneamino]imidazole-4-carboxamide. It participates in amino-acid biosynthesis; L-histidine biosynthesis; L-histidine from 5-phospho-alpha-D-ribose 1-diphosphate: step 2/9. Its pathway is amino-acid biosynthesis; L-histidine biosynthesis; L-histidine from 5-phospho-alpha-D-ribose 1-diphosphate: step 3/9. The polypeptide is Histidine biosynthesis bifunctional protein HisIE (Thermus thermophilus (strain ATCC BAA-163 / DSM 7039 / HB27)).